Here is a 146-residue protein sequence, read N- to C-terminus: uncharacterized protein (146 aa).

It to E.coli YmfS.

This is an uncharacterized protein from Escherichia coli (strain K12).